The primary structure comprises 181 residues: NAD(P)H-quinone oxidoreductase subunit I, chloroplastic (181 aa).

2 4Fe-4S ferredoxin-type domains span residues 52–81 (GRIHFEFDKCIACEVCVRVCPINLPVVDWE) and 92–121 (KSYSIDFGVCIFCGNCVEFCPTNCLSMTEE). Residues Cys61, Cys64, Cys67, Cys71, Cys101, Cys104, Cys107, and Cys111 each coordinate [4Fe-4S] cluster.

Belongs to the complex I 23 kDa subunit family. As to quaternary structure, NDH is composed of at least 16 different subunits, 5 of which are encoded in the nucleus. [4Fe-4S] cluster serves as cofactor.

It localises to the plastid. The protein resides in the chloroplast thylakoid membrane. The enzyme catalyses a plastoquinone + NADH + (n+1) H(+)(in) = a plastoquinol + NAD(+) + n H(+)(out). It carries out the reaction a plastoquinone + NADPH + (n+1) H(+)(in) = a plastoquinol + NADP(+) + n H(+)(out). In terms of biological role, NDH shuttles electrons from NAD(P)H:plastoquinone, via FMN and iron-sulfur (Fe-S) centers, to quinones in the photosynthetic chain and possibly in a chloroplast respiratory chain. The immediate electron acceptor for the enzyme in this species is believed to be plastoquinone. Couples the redox reaction to proton translocation, and thus conserves the redox energy in a proton gradient. This is NAD(P)H-quinone oxidoreductase subunit I, chloroplastic from Staurastrum punctulatum (Green alga).